We begin with the raw amino-acid sequence, 94 residues long: Translation initiation factor 1A 2 (94 aa).

The S1-like domain occupies 6 to 80 (GRRNLRMPSD…EKANIEWRYS (75 aa)).

The protein belongs to the eIF-1A family.

Functionally, seems to be required for maximal rate of protein biosynthesis. Enhances ribosome dissociation into subunits and stabilizes the binding of the initiator Met-tRNA(I) to 40 S ribosomal subunits. The sequence is that of Translation initiation factor 1A 2 from Haloquadratum walsbyi (strain DSM 16790 / HBSQ001).